The primary structure comprises 154 residues: Myoglobin (154 aa).

Positions 2–148 constitute a Globin domain; it reads GLSDGEWQLV…FRNDMATKYK (147 aa). A Phosphoserine modification is found at S4. H65 is a binding site for nitrite. H65 contributes to the O2 binding site. H94 is a binding site for heme b.

Belongs to the globin family. In terms of assembly, monomeric.

Its subcellular location is the cytoplasm. The protein resides in the sarcoplasm. It catalyses the reaction Fe(III)-heme b-[protein] + nitric oxide + H2O = Fe(II)-heme b-[protein] + nitrite + 2 H(+). The enzyme catalyses H2O2 + AH2 = A + 2 H2O. In terms of biological role, monomeric heme protein which primary function is to store oxygen and facilitate its diffusion within muscle tissues. Reversibly binds oxygen through a pentacoordinated heme iron and enables its timely and efficient release as needed during periods of heightened demand. Depending on the oxidative conditions of tissues and cells, and in addition to its ability to bind oxygen, it also has a nitrite reductase activity whereby it regulates the production of bioactive nitric oxide. Under stress conditions, like hypoxia and anoxia, it also protects cells against reactive oxygen species thanks to its pseudoperoxidase activity. In Tachyglossus aculeatus aculeatus (Southeast Australian short-beaked echidna), this protein is Myoglobin (MB).